A 283-amino-acid chain; its full sequence is MAPSSAHNNGFYVLMLVGIVVSTMVATCAGSFYQDFDLTWGGDRAKIFNGGQLLSLSLDKVSGSGFKSKKEYLFGRIDMQLKLVAGNSAGTVTAYYLSSQGPTHDEIDFEFLGNLSGDPYILHTNIFTQGKGNREQQFYLWFDPTRNFHTYSIIWKPQHIIFLVDNTPIRVFKNAEPLGVPFPKNQPMRIYSSLWNADDWATRGGLVKTDWSKAPFTAYYRNFKAIEFSSKSSISNSGAEYEANELDAYSRRRLRWVQKYFMIYNYCSDLKRFPQGLPAECKR.

A signal peptide spans 1–30 (MAPSSAHNNGFYVLMLVGIVVSTMVATCAG). The 190-residue stretch at 31–220 (SFYQDFDLTW…WSKAPFTAYY (190 aa)) folds into the GH16 domain. Glu-106 serves as the catalytic Nucleophile. The active-site Proton donor is Glu-110. Glu-110 contacts xyloglucan. A glycan (N-linked (GlcNAc...) asparagine) is linked at Asn-114. Xyloglucan-binding positions include 123 to 125 (HTN), 133 to 135 (NRE), 199 to 200 (DW), Gly-204, and Arg-272. Cys-267 and Cys-281 are oxidised to a cystine.

Belongs to the glycosyl hydrolase 16 family. Contains at least one intrachain disulfide bond essential for its enzymatic activity. In terms of processing, N-glycosylated; not essential for its enzymatic activity.

It localises to the secreted. The protein resides in the cell wall. It is found in the extracellular space. Its subcellular location is the apoplast. It catalyses the reaction breaks a beta-(1-&gt;4) bond in the backbone of a xyloglucan and transfers the xyloglucanyl segment on to O-4 of the non-reducing terminal glucose residue of an acceptor, which can be a xyloglucan or an oligosaccharide of xyloglucan.. Catalyzes xyloglucan endohydrolysis (XEH) and/or endotransglycosylation (XET). Cleaves and religates xyloglucan polymers, an essential constituent of the primary cell wall, and thereby participates in cell wall construction of growing tissues. This is Xyloglucan endotransglucosylase/hydrolase 2 from Glycine max (Soybean).